Here is a 453-residue protein sequence, read N- to C-terminus: Bifunctional protein GlmU (453 aa).

Residues 1-227 are pyrophosphorylase; that stretch reads MTQDIVILAA…EAEVAGVNDR (227 aa). UDP-N-acetyl-alpha-D-glucosamine is bound by residues 8 to 11, K22, Q73, 78 to 79, 100 to 102, G137, E152, N167, and N225; these read LAAG, GT, and YGD. D102 lines the Mg(2+) pocket. N225 contributes to the Mg(2+) binding site. Residues 228-248 form a linker region; sequence VQLAALERELQNQQAVSLMQN. Residues 249-453 form an N-acetyltransferase region; sequence GATLLDPSRI…KDNWPRPIKK (205 aa). UDP-N-acetyl-alpha-D-glucosamine contacts are provided by R331 and K349. H361 (proton acceptor) is an active-site residue. Residues Y364 and N375 each coordinate UDP-N-acetyl-alpha-D-glucosamine. Residues A378, 384-385, S403, A421, and R438 each bind acetyl-CoA; that span reads NY.

In the N-terminal section; belongs to the N-acetylglucosamine-1-phosphate uridyltransferase family. This sequence in the C-terminal section; belongs to the transferase hexapeptide repeat family. In terms of assembly, homotrimer. The cofactor is Mg(2+).

The protein localises to the cytoplasm. It carries out the reaction alpha-D-glucosamine 1-phosphate + acetyl-CoA = N-acetyl-alpha-D-glucosamine 1-phosphate + CoA + H(+). The enzyme catalyses N-acetyl-alpha-D-glucosamine 1-phosphate + UTP + H(+) = UDP-N-acetyl-alpha-D-glucosamine + diphosphate. Its pathway is nucleotide-sugar biosynthesis; UDP-N-acetyl-alpha-D-glucosamine biosynthesis; N-acetyl-alpha-D-glucosamine 1-phosphate from alpha-D-glucosamine 6-phosphate (route II): step 2/2. The protein operates within nucleotide-sugar biosynthesis; UDP-N-acetyl-alpha-D-glucosamine biosynthesis; UDP-N-acetyl-alpha-D-glucosamine from N-acetyl-alpha-D-glucosamine 1-phosphate: step 1/1. It participates in bacterial outer membrane biogenesis; LPS lipid A biosynthesis. Its function is as follows. Catalyzes the last two sequential reactions in the de novo biosynthetic pathway for UDP-N-acetylglucosamine (UDP-GlcNAc). The C-terminal domain catalyzes the transfer of acetyl group from acetyl coenzyme A to glucosamine-1-phosphate (GlcN-1-P) to produce N-acetylglucosamine-1-phosphate (GlcNAc-1-P), which is converted into UDP-GlcNAc by the transfer of uridine 5-monophosphate (from uridine 5-triphosphate), a reaction catalyzed by the N-terminal domain. This chain is Bifunctional protein GlmU, found in Marinomonas sp. (strain MWYL1).